The chain runs to 829 residues: Outer dense fiber protein 2 (829 aa).

2 positions are modified to phosphoserine: S73 and S74. Residue T92 is modified to Phosphothreonine. S95 is modified (phosphoserine; by TSSK4). Residues S106 and S109 each carry the phosphoserine modification. T110 is subject to Phosphothreonine. 2 positions are modified to phosphoserine: S115 and S129. K138 participates in a covalent cross-link: Glycyl lysine isopeptide (Lys-Gly) (interchain with G-Cter in SUMO2). The residue at position 139 (S139) is a Phosphoserine. Positions 144–217 (QKGERQMAKR…MSKLVEAEMD (74 aa)) form a coiled coil. Residue T231 is modified to Phosphothreonine. Coiled-coil stretches lie at residues 245–423 (DINT…AEQL) and 461–798 (EIIV…NYVQ). At S261 the chain carries Phosphoserine. Residues 392–413 (KQKGDRDKESLKKAIRAQKERA) are disordered. The interaction with BBOF1 stretch occupies residues 537 to 701 (KNYEGMIDNY…EAIHQSQLRL (165 aa)). S632 is modified (phosphoserine).

The protein belongs to the ODF2 family. Self-associates. Associates with microtubules and forms a fibrillar structure partially linked to the microtubule network. Interacts via its C-terminus with PLK1. Interacts with ODF1. Interacts with MARK4; the interaction is required for localization of ODF2 to centrioles. Interacts with TSSK4. Interacts with AKNA. Interacts with QRICH2. Interacts with CFAP58. Interacts with BBOF1. Interacts with CCDC38. Interacts with CCDC42. Tyrosine phosphorylated. Phosphorylated by TSSK4 on Ser-95. As to expression, testis-specific (at protein level). Highly expressed in cytoplasm of step 2 round spermatids. Detected in the middle piece and extends to about half the principal piece of the sperm tails.

The protein localises to the cytoplasm. The protein resides in the cytoskeleton. Its subcellular location is the microtubule organizing center. It is found in the centrosome. It localises to the cell projection. The protein localises to the cilium. The protein resides in the centriole. Its subcellular location is the spindle pole. It is found in the flagellum. Functionally, seems to be a major component of sperm tail outer dense fibers (ODF). ODFs are filamentous structures located on the outside of the axoneme in the midpiece and principal piece of the mammalian sperm tail and may help to maintain the passive elastic structures and elastic recoil of the sperm tail. May have a modulating influence on sperm motility. Functions as a general scaffold protein that is specifically localized at the distal/subdistal appendages of mother centrioles. Component of the centrosome matrix required for the localization of PLK1 and NIN to the centrosomes. Required for the formation and/or maintenance of normal CETN1 assembly. The polypeptide is Outer dense fiber protein 2 (ODF2) (Homo sapiens (Human)).